The sequence spans 524 residues: Ribonuclease Y (524 aa).

The helical transmembrane segment at 7–27 threads the bilayer; it reads LGGLLTGIVIAIIASIIASVI. Residues 214–299 form the KH domain; that stretch reads TVSVVPLPND…EMVEKARKEV (86 aa). One can recognise an HD domain in the interval 340–433; sequence VLSHSIEVAR…VQAADSISAA (94 aa).

The protein belongs to the RNase Y family.

The protein localises to the cell membrane. Functionally, endoribonuclease that initiates mRNA decay. This Acetivibrio thermocellus (strain ATCC 27405 / DSM 1237 / JCM 9322 / NBRC 103400 / NCIMB 10682 / NRRL B-4536 / VPI 7372) (Clostridium thermocellum) protein is Ribonuclease Y.